Reading from the N-terminus, the 207-residue chain is FMN-dependent NADH:quinone oxidoreductase 2 (207 aa).

FMN-binding positions include S10, 16–18 (SIS), 96–99 (MYNL), and 141–144 (SRGG).

This sequence belongs to the azoreductase type 1 family. In terms of assembly, homodimer. The cofactor is FMN.

It carries out the reaction 2 a quinone + NADH + H(+) = 2 a 1,4-benzosemiquinone + NAD(+). It catalyses the reaction N,N-dimethyl-1,4-phenylenediamine + anthranilate + 2 NAD(+) = 2-(4-dimethylaminophenyl)diazenylbenzoate + 2 NADH + 2 H(+). In terms of biological role, quinone reductase that provides resistance to thiol-specific stress caused by electrophilic quinones. Functionally, also exhibits azoreductase activity. Catalyzes the reductive cleavage of the azo bond in aromatic azo compounds to the corresponding amines. The chain is FMN-dependent NADH:quinone oxidoreductase 2 from Trichormus variabilis (strain ATCC 29413 / PCC 7937) (Anabaena variabilis).